A 1150-amino-acid chain; its full sequence is PAN2-PAN3 deadenylation complex catalytic subunit pan2 (1150 aa).

WD repeat units lie at residues 96–139 and 270–309; these read AHEE…DKLH and ANVS…HFNE. The interval 310–446 is linker; sequence MSKEAEFGDV…GAKINGETDD (137 aa). The 370-residue stretch at 447-816 folds into the USP domain; sequence DPLLKYSNVE…IPCVLAYQVQ (370 aa). Residues 865–1043 form the Exonuclease domain; sequence VALDTEFVDL…IEDARMALRL (179 aa). Residues Asp-868, Glu-870, Asp-977, and Asp-1036 each contribute to the a divalent metal cation site. The tract at residues 1074 to 1150 is disordered; sequence PPPRNGVPTV…GDFFSGSPLK (77 aa). The segment covering 1091–1106 has biased composition (polar residues); that stretch reads VTMQNNSGRNTPSTSD. Over residues 1108-1120 the composition is skewed to low complexity; that stretch reads AGAAASAPATPRQ.

The protein belongs to the peptidase C19 family. PAN2 subfamily. As to quaternary structure, forms a heterotrimer with an asymmetric homodimer of the regulatory subunit pan3 to form the poly(A)-nuclease (PAN) deadenylation complex. It depends on a divalent metal cation as a cofactor.

It localises to the cytoplasm. The enzyme catalyses Exonucleolytic cleavage of poly(A) to 5'-AMP.. Its activity is regulated as follows. Positively regulated by the regulatory subunit pan3. Catalytic subunit of the poly(A)-nuclease (PAN) deadenylation complex, one of two cytoplasmic mRNA deadenylases involved in mRNA turnover. PAN specifically shortens poly(A) tails of RNA and the activity is stimulated by poly(A)-binding protein pab1. PAN deadenylation is followed by rapid degradation of the shortened mRNA tails by the CCR4-NOT complex. Deadenylated mRNAs are then degraded by two alternative mechanisms, namely exosome-mediated 3'-5' exonucleolytic degradation, or deadenylation-dependent mRNA decaping and subsequent 5'-3' exonucleolytic degradation by xrn1. May also be involved in post-transcriptional maturation of mRNA poly(A) tails. In Aspergillus niger (strain ATCC MYA-4892 / CBS 513.88 / FGSC A1513), this protein is PAN2-PAN3 deadenylation complex catalytic subunit pan2.